The primary structure comprises 541 residues: Berberine bridge enzyme-like 24 (541 aa).

An N-terminal signal peptide occupies residues 1–32; it reads MGNSKPLPTISCIIVSVLYFSFYCITPTSSSA. Cysteines 41 and 105 form a disulfide. The N-linked (GlcNAc...) asparagine glycan is linked to asparagine 62. The region spanning 83–259 is the FAD-binding PCMH-type domain; the sequence is SMPKPGFIFR…LAWKIKLVPV (177 aa). Residues 120–184 constitute a cross-link (6-(S-cysteinyl)-8alpha-(pros-histidyl)-FAD (His-Cys)); it reads HDFEALSYVS…KIHGFPAGLC (65 aa). Residues asparagine 309, asparagine 408, and asparagine 435 are each glycosylated (N-linked (GlcNAc...) asparagine).

This sequence belongs to the oxygen-dependent FAD-linked oxidoreductase family. The cofactor is FAD. Post-translationally, the FAD cofactor is bound via a bicovalent 6-S-cysteinyl, 8alpha-N1-histidyl FAD linkage.

Its subcellular location is the secreted. The protein localises to the cell wall. This Arabidopsis thaliana (Mouse-ear cress) protein is Berberine bridge enzyme-like 24.